The following is a 669-amino-acid chain: DNA ligase (669 aa).

NAD(+) is bound by residues 34–38 (DAEYD), 83–84 (SL), and glutamate 114. Catalysis depends on lysine 116, which acts as the N6-AMP-lysine intermediate. Residues arginine 137, glutamate 171, lysine 287, and lysine 311 each coordinate NAD(+). Zn(2+)-binding residues include cysteine 405, cysteine 408, cysteine 423, and cysteine 428. In terms of domain architecture, BRCT spans 591–669 (NVESYFAGKT…EERFLQELNK (79 aa)).

This sequence belongs to the NAD-dependent DNA ligase family. LigA subfamily. The cofactor is Mg(2+). Mn(2+) is required as a cofactor.

The catalysed reaction is NAD(+) + (deoxyribonucleotide)n-3'-hydroxyl + 5'-phospho-(deoxyribonucleotide)m = (deoxyribonucleotide)n+m + AMP + beta-nicotinamide D-nucleotide.. DNA ligase that catalyzes the formation of phosphodiester linkages between 5'-phosphoryl and 3'-hydroxyl groups in double-stranded DNA using NAD as a coenzyme and as the energy source for the reaction. It is essential for DNA replication and repair of damaged DNA. This is DNA ligase from Bacillus cereus (strain G9842).